The following is a 543-amino-acid chain: MAKDIKFSADARAAMVRGVDMLADTVKVTLGPKGRNVVLEKAFGSPLITNDGVTIAKEIELEDHFENMGAKLVSEVASKTNDIAGDGTTTATVLTQAIVHEGLKNVTAGANPIGIRRGIETATATAVEALKAIAQPVSGKEAIAQVAAVSSRSEKVGEYISEAMERVGNDGVITIEESRGMETELEVVEGMQFDRGYLSQYMVTDNEKMVADLENPFILITDKKVSNIQDILPLLEEVLKTNRPLLIIADDVDGEALPTLVLNKIRGTFSVVAVKAPGFGDRRKAMLEDIAILTGGTVITEDLGLELKDATMTALGQAAKITVDKDSTVIVEGSGSSEAIANRIALIKSQLETTTSDFDREKLQERLAKLAGGVAVIKVGAPTETALKEMKLRIEDALNATRAAVEEGIVAGGGTALITVIEKVAALELEGDDATGRNIVLRALEEPVRQIALNAGYEGSVVIDKLKNSPAGTGFNAATGEWVDMIKTGIIDPVKVTRSALQNAASVASLILTTEAVVANKPEPAAPAPAMPAGMDPGMMGGF.

Residues 29–32 (TLGP), 86–90 (DGTTT), glycine 413, 476–478 (NAA), and aspartate 492 each bind ATP.

The protein belongs to the chaperonin (HSP60) family. In terms of assembly, forms a cylinder of 14 subunits composed of two heptameric rings stacked back-to-back. Interacts with the co-chaperonin GroES.

The protein resides in the cytoplasm. The catalysed reaction is ATP + H2O + a folded polypeptide = ADP + phosphate + an unfolded polypeptide.. Its function is as follows. Together with its co-chaperonin GroES, plays an essential role in assisting protein folding. The GroEL-GroES system forms a nano-cage that allows encapsulation of the non-native substrate proteins and provides a physical environment optimized to promote and accelerate protein folding. This Streptococcus pyogenes serotype M49 (strain NZ131) protein is Chaperonin GroEL.